Reading from the N-terminus, the 55-residue chain is Large ribosomal subunit protein bL33 (55 aa).

The protein belongs to the bacterial ribosomal protein bL33 family.

This Ruegeria pomeroyi (strain ATCC 700808 / DSM 15171 / DSS-3) (Silicibacter pomeroyi) protein is Large ribosomal subunit protein bL33.